Consider the following 75-residue polypeptide: MLDKVKEIIVEQLGVDADQIKPESNFVDDLGADSLDTVELIMSFEEEFGVEIPDTEAEKIKTVQDVINYIEANKK.

The 74-residue stretch at 1-74 (MLDKVKEIIV…DVINYIEANK (74 aa)) folds into the Carrier domain. Ser-34 carries the post-translational modification O-(pantetheine 4'-phosphoryl)serine.

Belongs to the acyl carrier protein (ACP) family. Post-translationally, 4'-phosphopantetheine is transferred from CoA to a specific serine of apo-ACP by AcpS. This modification is essential for activity because fatty acids are bound in thioester linkage to the sulfhydryl of the prosthetic group.

The protein localises to the cytoplasm. It participates in lipid metabolism; fatty acid biosynthesis. Its function is as follows. Carrier of the growing fatty acid chain in fatty acid biosynthesis. The polypeptide is Acyl carrier protein (Fusobacterium nucleatum subsp. nucleatum (strain ATCC 25586 / DSM 15643 / BCRC 10681 / CIP 101130 / JCM 8532 / KCTC 2640 / LMG 13131 / VPI 4355)).